We begin with the raw amino-acid sequence, 410 residues long: Translation initiation factor 2 subunit gamma (410 aa).

One can recognise a tr-type G domain in the interval 6–203 (QSEVNIGMVG…AIQEFIPTPE (198 aa)). The tract at residues 15–22 (GHVDHGKT) is G1. Mg(2+)-binding residues include Asp-18, Thr-22, Gly-43, and Ser-45. Residue 18–23 (DHGKTS) coordinates GTP. The tract at residues 43 to 47 (GISIR) is G2. The Zn(2+) site is built by Cys-58, Cys-61, Cys-73, and Cys-76. Residues 90–93 (DAPG) form a G3 region. GTP is bound by residues 146–149 (NKID) and 181–183 (SAH). The segment at 146–149 (NKID) is G4. A G5 region spans residues 181–183 (SAH).

This sequence belongs to the TRAFAC class translation factor GTPase superfamily. Classic translation factor GTPase family. EIF2G subfamily. As to quaternary structure, heterotrimer composed of an alpha, a beta and a gamma chain. The cofactor is Mg(2+).

It catalyses the reaction GTP + H2O = GDP + phosphate + H(+). EIF-2 functions in the early steps of protein synthesis by forming a ternary complex with GTP and initiator tRNA. The protein is Translation initiation factor 2 subunit gamma of Methanococcus maripaludis (strain C7 / ATCC BAA-1331).